Reading from the N-terminus, the 296-residue chain is 4-hydroxy-tetrahydrodipicolinate synthase (296 aa).

Thr-49 is a binding site for pyruvate. Tyr-137 acts as the Proton donor/acceptor in catalysis. The active-site Schiff-base intermediate with substrate is Lys-165. Position 207 (Val-207) interacts with pyruvate.

It belongs to the DapA family. In terms of assembly, homotetramer; dimer of dimers.

The protein resides in the cytoplasm. The catalysed reaction is L-aspartate 4-semialdehyde + pyruvate = (2S,4S)-4-hydroxy-2,3,4,5-tetrahydrodipicolinate + H2O + H(+). It functions in the pathway amino-acid biosynthesis; L-lysine biosynthesis via DAP pathway; (S)-tetrahydrodipicolinate from L-aspartate: step 3/4. Its function is as follows. Catalyzes the condensation of (S)-aspartate-beta-semialdehyde [(S)-ASA] and pyruvate to 4-hydroxy-tetrahydrodipicolinate (HTPA). The polypeptide is 4-hydroxy-tetrahydrodipicolinate synthase (Nitrobacter hamburgensis (strain DSM 10229 / NCIMB 13809 / X14)).